The sequence spans 238 residues: 1-(5-phosphoribosyl)-5-[(5-phosphoribosylamino)methylideneamino] imidazole-4-carboxamide isomerase (238 aa).

The Proton acceptor role is filled by aspartate 8. The Proton donor role is filled by aspartate 130.

This sequence belongs to the HisA/HisF family.

The protein resides in the cytoplasm. The enzyme catalyses 1-(5-phospho-beta-D-ribosyl)-5-[(5-phospho-beta-D-ribosylamino)methylideneamino]imidazole-4-carboxamide = 5-[(5-phospho-1-deoxy-D-ribulos-1-ylimino)methylamino]-1-(5-phospho-beta-D-ribosyl)imidazole-4-carboxamide. Its pathway is amino-acid biosynthesis; L-histidine biosynthesis; L-histidine from 5-phospho-alpha-D-ribose 1-diphosphate: step 4/9. This chain is 1-(5-phosphoribosyl)-5-[(5-phosphoribosylamino)methylideneamino] imidazole-4-carboxamide isomerase, found in Methanococcus vannielii (strain ATCC 35089 / DSM 1224 / JCM 13029 / OCM 148 / SB).